Here is a 641-residue protein sequence, read N- to C-terminus: 1-deoxy-D-xylulose-5-phosphate synthase (641 aa).

Thiamine diphosphate contacts are provided by residues His-79 and 120-122 (AHS). Asp-151 is a binding site for Mg(2+). Thiamine diphosphate-binding positions include 152-153 (GA), Asn-180, Tyr-290, and Glu-372. Asn-180 is a binding site for Mg(2+).

It belongs to the transketolase family. DXPS subfamily. In terms of assembly, homodimer. Mg(2+) is required as a cofactor. Requires thiamine diphosphate as cofactor.

It catalyses the reaction D-glyceraldehyde 3-phosphate + pyruvate + H(+) = 1-deoxy-D-xylulose 5-phosphate + CO2. It participates in metabolic intermediate biosynthesis; 1-deoxy-D-xylulose 5-phosphate biosynthesis; 1-deoxy-D-xylulose 5-phosphate from D-glyceraldehyde 3-phosphate and pyruvate: step 1/1. Catalyzes the acyloin condensation reaction between C atoms 2 and 3 of pyruvate and glyceraldehyde 3-phosphate to yield 1-deoxy-D-xylulose-5-phosphate (DXP). This Bradyrhizobium sp. (strain ORS 278) protein is 1-deoxy-D-xylulose-5-phosphate synthase.